Here is a 207-residue protein sequence, read N- to C-terminus: Varv peptide A/Kalata-B1 (207 aa).

The N-terminal stretch at 1–20 (MKMFIVLVLSAAFALPAAFA) is a signal peptide. Positions 21–66 (TEQDVITLQAYEELLKNGAANGMTKTVISSPVLEEALVSYSKNKLG) are excised as a propeptide. A cross-link (cyclopeptide (Gly-Asn)) is located at residues 67–95 (GLPVCGETCVGGTCNTPGCSCSWPVCTRN). Intrachain disulfides connect C71/C85, C75/C87, and C80/C92. Residues 96–120 (SLESTKSANPLLEEALTAFAKKGLG) constitute a propeptide that is removed on maturation. Positions 121–149 (GLPVCGETCVGGTCNTPGCTCSWPVCTRN) form a cross-link, cyclopeptide (Gly-Asn). Cystine bridges form between C125/C139, C129/C141, and C134/C146. The propeptide occupies 150 to 174 (ALETQKPNHLLEEALVAFAKKGNLG). Positions 175 to 203 (GLPVCGETCVGGTCNTPGCSCSWPVCTRN) form a cross-link, cyclopeptide (Gly-Asn). 3 disulfide bridges follow: C179–C193, C183–C195, and C188–C200. The propeptide occupies 204 to 207 (ALAM).

It belongs to the cyclotide family. Moebius subfamily. Varv peptide A and kalata-B1 are cyclic peptides.

Probably participates in a plant defense mechanism. Has hemolytic activity. This Viola odorata (Sweet violet) protein is Varv peptide A/Kalata-B1.